The primary structure comprises 198 residues: uncharacterized protein (198 aa).

The signal sequence occupies residues 1–28 (MHPTQRKLMKRIILFLSLLFCIACPAIA).

The protein belongs to the fimbrial protein family.

Its subcellular location is the fimbrium. In terms of biological role, part of the yadCKLM-htrE-yadVN fimbrial operon. Could contribute to adhesion to various surfaces in specific environmental niches. This is an uncharacterized protein from Escherichia coli (strain K12).